The chain runs to 133 residues: ATP synthase epsilon chain (133 aa).

This sequence belongs to the ATPase epsilon chain family. In terms of assembly, F-type ATPases have 2 components, CF(1) - the catalytic core - and CF(0) - the membrane proton channel. CF(1) has five subunits: alpha(3), beta(3), gamma(1), delta(1), epsilon(1). CF(0) has three main subunits: a, b and c.

It is found in the cell membrane. Its function is as follows. Produces ATP from ADP in the presence of a proton gradient across the membrane. The polypeptide is ATP synthase epsilon chain (Bacillus mycoides (strain KBAB4) (Bacillus weihenstephanensis)).